The following is an 895-amino-acid chain: Probable inorganic carbon transporter subunit DabA 1 (895 aa).

Zn(2+) contacts are provided by C398, D400, H581, and C596.

It belongs to the inorganic carbon transporter (TC 9.A.2) DabA family. As to quaternary structure, forms a complex with DabB. It depends on Zn(2+) as a cofactor.

The protein resides in the cell inner membrane. Functionally, part of an energy-coupled inorganic carbon pump. The protein is Probable inorganic carbon transporter subunit DabA 1 of Rhodopirellula baltica (strain DSM 10527 / NCIMB 13988 / SH1).